Consider the following 496-residue polypeptide: Matrilin-1 (496 aa).

The signal sequence occupies residues 1-22; sequence MRVLSGTSLMLCSLLLLLQALC. The region spanning 23-222 is the VWFA 1 domain; that stretch reads SPGLAPQSRG…SRKFQEAFCV (200 aa). The N-linked (GlcNAc...) asparagine glycan is linked to Asn-76. An EGF-like domain is found at 223–263; sequence VSDLCATGDHDCEQVCISSPGSYTCACHEGFTLNSDGKTCN. 3 disulfide bridges follow: Cys-227–Cys-238, Cys-234–Cys-247, and Cys-249–Cys-262. A VWFA 2 domain is found at 264–453; it reads VCSGGGGSSA…GKKLQKKICV (190 aa). Asn-344 carries N-linked (GalNAc...) asparagine glycosylation. Residues 467–495 are a coiled coil; it reads QAKVEGLLQALTRKLEAVSKRLAILENTV.

In terms of assembly, homotrimer. Part of a complex composed of MATN1 (via VWFA1 domain), type 2 collagens and type 6 collagens. Forms a complex (via covalent bonds) with ACAN; the interaction increases in abundance with increasing age of the organism via an increase in occupancy of MATN1 binding sites. Interacts with COMP. N-glycosylated; reduces binding affinity for type 2 collagens.

The protein resides in the secreted. The protein localises to the extracellular space. It is found in the extracellular matrix. In terms of biological role, a major component of the extracellular matrix of non-articular cartilage. Binds to type 2 collagens and forms long concatenated protein networks as part of the extracellular matrix. Required for the network-like organization and bundling of collagen fibrils surrounding chondrocytes in the zones of maturation and hypertrophy. Required for mechanotransduction and adaption to mechanical loading in cartilage chondrocytes, resulting in an increase in expression of the extracellular matrix components ACAN and COL2A1. Acts as a moderator of angiogenesis in response to injury. This Homo sapiens (Human) protein is Matrilin-1.